The primary structure comprises 313 residues: DNA-directed RNA polymerase subunit alpha (313 aa).

The alpha N-terminal domain (alpha-NTD) stretch occupies residues 1–229 (MNSSNLLMEC…NLFKSIGEQK (229 aa)). The segment at 243-313 (IKPIDPYTHI…LKNKLGIVLK (71 aa)) is alpha C-terminal domain (alpha-CTD).

Belongs to the RNA polymerase alpha chain family. In terms of assembly, in plastids the minimal PEP RNA polymerase catalytic core is composed of four subunits: alpha, beta, beta', and beta''. When a (nuclear-encoded) sigma factor is associated with the core the holoenzyme is formed, which can initiate transcription.

The protein localises to the plastid. It localises to the chloroplast. It catalyses the reaction RNA(n) + a ribonucleoside 5'-triphosphate = RNA(n+1) + diphosphate. Its function is as follows. DNA-dependent RNA polymerase catalyzes the transcription of DNA into RNA using the four ribonucleoside triphosphates as substrates. This Thalassiosira pseudonana (Marine diatom) protein is DNA-directed RNA polymerase subunit alpha.